Consider the following 75-residue polypeptide: Beta-defensin 30 (75 aa).

An N-terminal signal peptide occupies residues 1-22 (MGSLQLTLVLFVLLSYVPPVRS). 3 cysteine pairs are disulfide-bonded: Cys35–Cys62, Cys42–Cys56, and Cys46–Cys63.

Belongs to the beta-defensin family.

It localises to the secreted. In terms of biological role, has antibacterial activity. The sequence is that of Beta-defensin 30 (Defb30) from Mus musculus (Mouse).